The sequence spans 472 residues: Pyridine nucleotide-disulfide oxidoreductase domain-containing protein 1 (472 aa).

Belongs to the class-I pyridine nucleotide-disulfide oxidoreductase family. PYROXD1 subfamily. The cofactor is FAD.

In terms of biological role, probable oxidoreductase. This Drosophila melanogaster (Fruit fly) protein is Pyridine nucleotide-disulfide oxidoreductase domain-containing protein 1.